A 66-amino-acid chain; its full sequence is Large ribosomal subunit protein uL29 (66 aa).

It belongs to the universal ribosomal protein uL29 family.

The sequence is that of Large ribosomal subunit protein uL29 from Thermosipho africanus (strain TCF52B).